A 233-amino-acid polypeptide reads, in one-letter code: tRNA (guanine-N(1)-)-methyltransferase (233 aa).

Residues Gly-121 and 140–145 (IGDYIL) each bind S-adenosyl-L-methionine.

It belongs to the RNA methyltransferase TrmD family. In terms of assembly, homodimer.

It localises to the cytoplasm. It catalyses the reaction guanosine(37) in tRNA + S-adenosyl-L-methionine = N(1)-methylguanosine(37) in tRNA + S-adenosyl-L-homocysteine + H(+). In terms of biological role, specifically methylates guanosine-37 in various tRNAs. This is tRNA (guanine-N(1)-)-methyltransferase from Endomicrobium trichonymphae.